The primary structure comprises 354 residues: DNA ligase C2 (354 aa).

Lys-29 (N6-AMP-lysine intermediate) is an active-site residue.

The protein belongs to the ATP-dependent DNA ligase family.

The enzyme catalyses ATP + (deoxyribonucleotide)n-3'-hydroxyl + 5'-phospho-(deoxyribonucleotide)m = (deoxyribonucleotide)n+m + AMP + diphosphate.. DNA ligase that seals nicks in double-stranded DNA during DNA replication, DNA recombination and DNA repair. Has weak intrinsic nick joining activities and accumulates DNA-adenylate. Acts as a backup for LigD in the Ku-LigD-dependent NHEJ pathway. The chain is DNA ligase C2 (ligC2) from Mycolicibacterium smegmatis (strain ATCC 700084 / mc(2)155) (Mycobacterium smegmatis).